A 145-amino-acid chain; its full sequence is Peptide methionine sulfoxide reductase MsrB (145 aa).

The MsrB domain maps to 6 to 129 (KNERLQQLTD…NSAALRFIPV (124 aa)). C118 acts as the Nucleophile in catalysis.

This sequence belongs to the MsrB Met sulfoxide reductase family.

The enzyme catalyses L-methionyl-[protein] + [thioredoxin]-disulfide + H2O = L-methionyl-(R)-S-oxide-[protein] + [thioredoxin]-dithiol. This Listeria monocytogenes serotype 4a (strain HCC23) protein is Peptide methionine sulfoxide reductase MsrB.